We begin with the raw amino-acid sequence, 989 residues long: Translation initiation factor IF-2 (989 aa).

2 disordered regions span residues 28–60 (GVTK…TDAD) and 97–397 (VRRD…DQNT). Composition is skewed to basic and acidic residues over residues 40–60 (ETDK…TDAD) and 122–178 (ELQR…EAAK). The segment covering 182–223 (AAAAEAAAREQQTQASKPAQAAQPAAAKAEPVAAKAAEPVVA) has biased composition (low complexity). A compositionally biased stretch (basic and acidic residues) spans 231–280 (ERAAAERAAQREAAKKAEDAARQAAEKARAEQEEIAKRRAAAEAEARAIR). Positions 318–345 (RPAGEAPARPAAKKPAAAAPAATTTPSA) are enriched in low complexity. The span at 374–387 (TSGGVDRGWRGGPK) shows a compositional bias: gly residues. The tr-type G domain occupies 489 to 658 (PRPPVVTVMG…LLQAEVLELK (170 aa)). Positions 498–505 (GHVDHGKT) are G1. Residue 498-505 (GHVDHGKT) coordinates GTP. The segment at 523–527 (GITQH) is G2. Residues 544–547 (DTPG) are G3. Residues 544 to 548 (DTPGH) and 598 to 601 (NKID) each bind GTP. Residues 598–601 (NKID) are G4. Positions 634 to 636 (SAK) are G5.

The protein belongs to the TRAFAC class translation factor GTPase superfamily. Classic translation factor GTPase family. IF-2 subfamily.

It localises to the cytoplasm. Functionally, one of the essential components for the initiation of protein synthesis. Protects formylmethionyl-tRNA from spontaneous hydrolysis and promotes its binding to the 30S ribosomal subunits. Also involved in the hydrolysis of GTP during the formation of the 70S ribosomal complex. The protein is Translation initiation factor IF-2 of Paraburkholderia xenovorans (strain LB400).